Here is a 384-residue protein sequence, read N- to C-terminus: Helix-loop-helix protein delilah (384 aa).

2 disordered regions span residues Met-1 to Ala-101 and Glu-187 to Pro-227. A compositionally biased stretch (basic residues) spans Lys-75 to Thr-86. One can recognise a bHLH domain in the interval Tyr-94–Leu-153. Low complexity predominate over residues Lys-209–Lys-224.

As to quaternary structure, efficient DNA binding requires dimerization with another bHLH protein, possibly with da. As to expression, expressed almost exclusively in the attachments sites of the somatic muscles to tendon cells in the epidermis.

Its subcellular location is the nucleus. Its function is as follows. Probably plays an important role in the differentiation of epidermal cells into the tendon cells that form the attachment sites for all muscles. This chain is Helix-loop-helix protein delilah (tx), found in Drosophila melanogaster (Fruit fly).